The following is a 536-amino-acid chain: Sensory rhodopsin I transducer (536 aa).

Over 2–14 the chain is Cytoplasmic; sequence TIAWARRRYGVKL. The chain crosses the membrane as a helical span at residues 15–29; sequence GLGYIATAGLLVGVG. The Extracellular portion of the chain corresponds to 30 to 39; the sequence is VTTNDVPSTI. A helical transmembrane segment spans residues 40–55; sequence VAGIAGLLTLGSINAA. Residues 55–107 form the HAMP 1 domain; the sequence is AETVASIKEIAAQTERVANGNLEQEVTSTRTDEFGSLADSIEQMRQSLRGRLN. The Cytoplasmic portion of the chain corresponds to 56 to 536; the sequence is ETVASIKEIA…MRAGADGGGA (481 aa). The segment at 116–145 is disordered; sequence LEETQAEAETAREEAEQAKQEAQAAEREAR. Over residues 124-145 the composition is skewed to basic and acidic residues; the sequence is ETAREEAEQAKQEAQAAEREAR. Positions 149–202 constitute an HAMP 2 domain; sequence ATYQDTAKRYGETMEAAATGDLTQRVDVDTDHEAMETVGTAFNQMMDDLQATVR. In terms of domain architecture, Methyl-accepting transducer spans 221 to 459; the sequence is TSADIEASAG…STATSVERVA (239 aa). E266 is subject to Glutamate methyl ester (Glu). The disordered stretch occupies residues 278–307; sequence SEDVATASDAARDSSKSALDEMSSIETEVD. A compositionally biased stretch (basic and acidic residues) spans 287–296; that stretch reads AARDSSKSAL. E473 bears the Glutamate methyl ester (Glu) mark. Positions 512 to 536 are disordered; the sequence is TEDSETAGGSVEQPVMRAGADGGGA.

The protein belongs to the methyl-accepting chemotaxis (MCP) protein family. Post-translationally, methylated by CheR.

It localises to the cell membrane. In terms of biological role, transduces signals from the phototaxis receptor sensory rhodopsin I (SR-I) to the flagellar motor. Responds to light changes through the variation of the level of methylation. This is Sensory rhodopsin I transducer (htr1) from Halobacterium salinarum (strain ATCC 29341 / DSM 671 / R1).